The sequence spans 184 residues: Photosystem I assembly protein Ycf4 (184 aa).

The next 2 helical transmembrane spans lie at 25-45 and 57-77; these read ACILFFGSLGFFLVGISSYLG and ILFVPQGIVMCFYGIAGLFIS.

Belongs to the Ycf4 family.

It is found in the plastid. It localises to the chloroplast thylakoid membrane. Its function is as follows. Seems to be required for the assembly of the photosystem I complex. The sequence is that of Photosystem I assembly protein Ycf4 from Cycas taitungensis (Prince sago).